The sequence spans 362 residues: GTPase Obg (362 aa).

Residues Met-1–Ile-159 form the Obg domain. The OBG-type G domain occupies Ala-160 to Val-327. GTP contacts are provided by residues Gly-166 to Ser-173, Phe-191 to His-195, Asp-212 to Gly-215, Ser-279 to Asp-282, and Ser-308 to Val-310. Ser-173 and Thr-193 together coordinate Mg(2+). Positions Glu-332 to Pro-362 are disordered. The span at Val-348–Pro-362 shows a compositional bias: acidic residues.

This sequence belongs to the TRAFAC class OBG-HflX-like GTPase superfamily. OBG GTPase family. In terms of assembly, monomer. It depends on Mg(2+) as a cofactor.

It is found in the cytoplasm. Its function is as follows. An essential GTPase which binds GTP, GDP and possibly (p)ppGpp with moderate affinity, with high nucleotide exchange rates and a fairly low GTP hydrolysis rate. Plays a role in control of the cell cycle, stress response, ribosome biogenesis and in those bacteria that undergo differentiation, in morphogenesis control. The chain is GTPase Obg from Rhizobium etli (strain CIAT 652).